The following is a 167-amino-acid chain: Mitochondrial fission 1 protein B (167 aa).

The TPR repeat unit spans residues 92 to 125 (REKLYLLALGYYRSGDFSRSRDCIERCLEVEPES). A helical transmembrane segment spans residues 144–164 (VIGVGIAVTAVGVVAGIAAAI).

Belongs to the FIS1 family. As to quaternary structure, interacts with PEX11A, PEX11B, PEX11C, PEX11D and PEX11E.

The protein resides in the mitochondrion outer membrane. The protein localises to the peroxisome membrane. Its function is as follows. Component of the peroxisomal and mitochondrial division machineries. Plays a role in promoting the fission of mitochondria and peroxisomes. In association with PEX11C, PEX11D, PEX11E and DRP3A, is involved in cell cycle-associated constitutive self-replication of preexisting peroxisomes. The chain is Mitochondrial fission 1 protein B (FIS1B) from Arabidopsis thaliana (Mouse-ear cress).